Consider the following 404-residue polypeptide: Sulfate adenylyltransferase (404 aa).

Belongs to the sulfate adenylyltransferase family.

The catalysed reaction is sulfate + ATP + H(+) = adenosine 5'-phosphosulfate + diphosphate. It functions in the pathway sulfur metabolism; hydrogen sulfide biosynthesis; sulfite from sulfate: step 1/3. This Chlorobaculum tepidum (strain ATCC 49652 / DSM 12025 / NBRC 103806 / TLS) (Chlorobium tepidum) protein is Sulfate adenylyltransferase.